The chain runs to 134 residues: Endoribonuclease YbeY (134 aa).

Positions 94, 98, and 104 each coordinate Zn(2+).

It belongs to the endoribonuclease YbeY family. Zn(2+) is required as a cofactor.

Its subcellular location is the cytoplasm. Single strand-specific metallo-endoribonuclease involved in late-stage 70S ribosome quality control and in maturation of the 3' terminus of the 16S rRNA. The polypeptide is Endoribonuclease YbeY (Campylobacter fetus subsp. fetus (strain 82-40)).